The primary structure comprises 311 residues: Olfactory receptor-like protein OLF1 (311 aa).

Topologically, residues 1–24 are extracellular; the sequence is MDGNYTLVTEFILLGFPTRPELQI. N-linked (GlcNAc...) asparagine glycosylation occurs at Asn-4. A helical transmembrane segment spans residues 25–48; sequence VLFLVFLTLYGIILTGNIGLMMLI. Residues 49–56 lie on the Cytoplasmic side of the membrane; that stretch reads RTDPHLQT. A helical membrane pass occupies residues 57–78; that stretch reads PMYFFLSNLSFADLCFSSAIVP. The Extracellular portion of the chain corresponds to 79-99; that stretch reads KMLVNFLSENKSISLYGCALQ. A helical membrane pass occupies residues 100 to 119; the sequence is FYFSCAFADTESFILAAMAY. The Cytoplasmic portion of the chain corresponds to 120 to 138; that stretch reads DRYVAICNPLLYTVVMSRG. Residues 139–157 form a helical membrane-spanning segment; the sequence is ICVWLIVLSYIGGNMSSLV. Topologically, residues 158-195 are extracellular; that stretch reads HTSFAFILKYCDKNVINHFFCDLPPLLKLSCTDTSVNE. A helical transmembrane segment spans residues 196–218; sequence WLLSTYGSSVEIFCFIVIVISYY. Topologically, residues 219 to 235 are cytoplasmic; the sequence is FILRSVLRIRSSSGRKK. A helical membrane pass occupies residues 236–259; that stretch reads TFSTCASHLTSVAIYQGTLLFIYS. Residues 260–271 are Extracellular-facing; it reads RPTYLYTPNTDK. Residues 272 to 291 form a helical membrane-spanning segment; it reads IISVFYTIIIPVLNPLIYSL. Over 292 to 311 the chain is Cytoplasmic; sequence RNKDVKDAAKRAVRLKVDSS.

The protein belongs to the G-protein coupled receptor 1 family.

It localises to the cell membrane. Functionally, putative odorant or sperm cell receptor. The protein is Olfactory receptor-like protein OLF1 of Canis lupus familiaris (Dog).